Here is an 851-residue protein sequence, read N- to C-terminus: Phosphatidate phosphatase LPIN3 (851 aa).

Residues 1–108 (MNYVGQLAET…VPPGLCTSPI (108 aa)) are N-LIP. 2 disordered regions span residues 114–385 (SGFP…YLDD) and 400–432 (QSDS…EPTL). Residues 140 to 151 (GRRKRRRRRKPK) are compositionally biased toward basic residues. The Nuclear localization signal motif lies at 141 to 148 (RRKRRRRR). Threonine 159 is subject to Phosphothreonine. 3 positions are modified to phosphoserine: serine 161, serine 162, and serine 224. Residues 268–286 (GRAGATSPPRGGPSTPSTS) are compositionally biased toward low complexity. The segment covering 418 to 429 (SLRDPNPEHEPE) has biased composition (basic and acidic residues). Residue serine 463 is modified to Phosphoserine. The span at 542–559 (SAQKEKTAAKEQQGEKTE) shows a compositional bias: basic and acidic residues. The disordered stretch occupies residues 542-591 (SAQKEKTAAKEQQGEKTEVLSSDDDAPDSPVILEIPSLPPSTPPSTPTYK). Residues 578-587 (SLPPSTPPST) are compositionally biased toward pro residues. The C-LIP stretch occupies residues 590 to 792 (YKKSLRLSSD…RIFTVNPRGE (203 aa)). A DXDXT motif motif is present at residues 644 to 648 (DIDGT). The LXXIL motif motif lies at 655–659 (LGHIL).

It belongs to the lipin family. Requires Mg(2+) as cofactor. In terms of tissue distribution, significant expression in intestine and other regions of the gastrointestinal tract.

Its subcellular location is the nucleus. It catalyses the reaction a 1,2-diacyl-sn-glycero-3-phosphate + H2O = a 1,2-diacyl-sn-glycerol + phosphate. With respect to regulation, inhibited by N-ethylmaleimide. Magnesium-dependent phosphatidate phosphatase enzyme which catalyzes the conversion of phosphatidic acid to diacylglycerol during triglyceride, phosphatidylcholine and phosphatidylethanolamine biosynthesis therefore regulates fatty acid metabolism. This is Phosphatidate phosphatase LPIN3 from Homo sapiens (Human).